Here is a 175-residue protein sequence, read N- to C-terminus: Peptide deformylase (175 aa).

Fe cation is bound by residues C92 and H134. Residue E135 is part of the active site. H138 is a Fe cation binding site.

The protein belongs to the polypeptide deformylase family. It depends on Fe(2+) as a cofactor.

It carries out the reaction N-terminal N-formyl-L-methionyl-[peptide] + H2O = N-terminal L-methionyl-[peptide] + formate. Removes the formyl group from the N-terminal Met of newly synthesized proteins. Requires at least a dipeptide for an efficient rate of reaction. N-terminal L-methionine is a prerequisite for activity but the enzyme has broad specificity at other positions. The polypeptide is Peptide deformylase (Blochmanniella floridana).